Reading from the N-terminus, the 97-residue chain is MTASLTTDSVADSIYQNILTSIIQDIISRQTVKRKLLKLQFPDAKPYYADPSGTLDIHGKAKQADSAVYIECNVCGREVSGNRFAAHLVRCLSRGRR.

The SGF11-type zinc-finger motif lies at 70–91; the sequence is IECNVCGREVSGNRFAAHLVRC.

Belongs to the SGF11 family. In terms of assembly, component of the 1.8 MDa SAGA transcription coactivator-HAT complex. SAGA is built of 5 distinct domains with specialized functions. Within the SAGA complex, SUS1, SGF11, SGF73 and UBP8 form an additional subcomplex of SAGA called the DUB module (deubiquitination module). Interacts directly with SGF73, SUS1 and UBP8.

It is found in the nucleus. Functionally, functions as a component of the transcription regulatory histone acetylation (HAT) complex SAGA. At the promoters, SAGA is required for recruitment of the basal transcription machinery. It influences RNA polymerase II transcriptional activity through different activities such as TBP interaction and promoter selectivity, interaction with transcription activators, and chromatin modification through histone acetylation and deubiquitination. SAGA acetylates nucleosomal histone H3 to some extent (to form H3K9ac, H3K14ac, H3K18ac and H3K23ac). SAGA interacts with DNA via upstream activating sequences (UASs). Involved in transcriptional regulation of a subset of SAGA-regulated genes. Within the SAGA complex, participates in a subcomplex, that specifically deubiquitinates histones H2B. The polypeptide is SAGA-associated factor 11 (Kluyveromyces lactis (strain ATCC 8585 / CBS 2359 / DSM 70799 / NBRC 1267 / NRRL Y-1140 / WM37) (Yeast)).